A 143-amino-acid chain; its full sequence is MFDFDATLPLMALQFLVLAVVLNAVFYKPLGKALDSRADYIRSNENQAREQLAKAQNLAQEYEKQLGDARRQSNEIIAAAQAQAKQIADEKIAQAQKEAQAQKEAAAKEIEQQKQEAMTALEQQVDALSRQILEKILGSELVK.

A helical membrane pass occupies residues 6–26 (ATLPLMALQFLVLAVVLNAVF).

Belongs to the ATPase B chain family. In terms of assembly, F-type ATPases have 2 components, F(1) - the catalytic core - and F(0) - the membrane proton channel. F(1) has five subunits: alpha(3), beta(3), gamma(1), delta(1), epsilon(1). F(0) has four main subunits: a(1), b(1), b'(1) and c(10-14). The alpha and beta chains form an alternating ring which encloses part of the gamma chain. F(1) is attached to F(0) by a central stalk formed by the gamma and epsilon chains, while a peripheral stalk is formed by the delta, b and b' chains.

The protein localises to the cellular thylakoid membrane. Functionally, f(1)F(0) ATP synthase produces ATP from ADP in the presence of a proton or sodium gradient. F-type ATPases consist of two structural domains, F(1) containing the extramembraneous catalytic core and F(0) containing the membrane proton channel, linked together by a central stalk and a peripheral stalk. During catalysis, ATP synthesis in the catalytic domain of F(1) is coupled via a rotary mechanism of the central stalk subunits to proton translocation. Its function is as follows. Component of the F(0) channel, it forms part of the peripheral stalk, linking F(1) to F(0). The b'-subunit is a diverged and duplicated form of b found in plants and photosynthetic bacteria. In Gloeothece citriformis (strain PCC 7424) (Cyanothece sp. (strain PCC 7424)), this protein is ATP synthase subunit b'.